Here is a 386-residue protein sequence, read N- to C-terminus: Succinate--CoA ligase [ADP-forming] subunit beta (386 aa).

An ATP-grasp domain is found at Lys9–Glu244. Residues Lys46, Gly53 to Gly55, Glu99, Ser102, and Glu107 contribute to the ATP site. Residues Asn199 and Asp213 each coordinate Mg(2+). Substrate contacts are provided by residues Asn264 and Gly321 to Met323.

It belongs to the succinate/malate CoA ligase beta subunit family. Heterotetramer of two alpha and two beta subunits. Requires Mg(2+) as cofactor.

It catalyses the reaction succinate + ATP + CoA = succinyl-CoA + ADP + phosphate. The catalysed reaction is GTP + succinate + CoA = succinyl-CoA + GDP + phosphate. Its pathway is carbohydrate metabolism; tricarboxylic acid cycle; succinate from succinyl-CoA (ligase route): step 1/1. Its function is as follows. Succinyl-CoA synthetase functions in the citric acid cycle (TCA), coupling the hydrolysis of succinyl-CoA to the synthesis of either ATP or GTP and thus represents the only step of substrate-level phosphorylation in the TCA. The beta subunit provides nucleotide specificity of the enzyme and binds the substrate succinate, while the binding sites for coenzyme A and phosphate are found in the alpha subunit. The sequence is that of Succinate--CoA ligase [ADP-forming] subunit beta from Wolbachia pipientis subsp. Culex pipiens (strain wPip).